Here is a 700-residue protein sequence, read N- to C-terminus: Elongation factor G 1 (700 aa).

A tr-type G domain is found at 8–290 (ERYRNIGISA…AVIDYLPSPA (283 aa)). GTP contacts are provided by residues 17–24 (AHIDAGKT), 88–92 (DTPGH), and 142–145 (NKMD).

It belongs to the TRAFAC class translation factor GTPase superfamily. Classic translation factor GTPase family. EF-G/EF-2 subfamily.

The protein resides in the cytoplasm. Catalyzes the GTP-dependent ribosomal translocation step during translation elongation. During this step, the ribosome changes from the pre-translocational (PRE) to the post-translocational (POST) state as the newly formed A-site-bound peptidyl-tRNA and P-site-bound deacylated tRNA move to the P and E sites, respectively. Catalyzes the coordinated movement of the two tRNA molecules, the mRNA and conformational changes in the ribosome. The polypeptide is Elongation factor G 1 (Bordetella parapertussis (strain 12822 / ATCC BAA-587 / NCTC 13253)).